The sequence spans 284 residues: Probable endonuclease 4 (284 aa).

Positions 69, 109, 145, 179, 182, 216, 229, 231, and 261 each coordinate Zn(2+).

Belongs to the AP endonuclease 2 family. Zn(2+) is required as a cofactor.

The enzyme catalyses Endonucleolytic cleavage to 5'-phosphooligonucleotide end-products.. Its function is as follows. Endonuclease IV plays a role in DNA repair. It cleaves phosphodiester bonds at apurinic or apyrimidinic (AP) sites, generating a 3'-hydroxyl group and a 5'-terminal sugar phosphate. The chain is Probable endonuclease 4 from Chlorobium phaeobacteroides (strain BS1).